The sequence spans 104 residues: Circadian clock oscillator protein KaiB (104 aa).

The protein belongs to the KaiB family. As to quaternary structure, the KaiABC complex composition changes during the circadian cycle to control KaiC phosphorylation. Complexes KaiC(6), KaiA(2-4):KaiC(6), KaiB(6):KaiC(6) and KaiC(6):KaiB(6):KaiA(12) are among the most important forms, many form cooperatively. Undergoes a major conformational rearrangment; in the free state forms homotetramers as a dimer of dimers. When bound to the CI domain of KaiC switches to a monomeric thioredoxin-fold (KaiB(fs)). KaiB(fs) binds CikA, leading it to dephosphorylate phospho-RpaA.

Functionally, key component of the KaiABC oscillator complex, which constitutes the main circadian regulator in cyanobacteria. Complex composition changes during the circadian cycle to control KaiC phosphorylation. KaiA stimulates KaiC autophosphorylation, while KaiB sequesters KaiA, leading to KaiC autodephosphorylation. Phospho-Ser-431 KaiC accumulation triggers binding of KaiB to form the KaiB(6):KaiC(6) complex, leading to changes in output regulators CikA and SasA. KaiB switches to a thioredoxin-like fold (KaiB(fs)) when bound to KaiC. KaiB(6):KaiC(6) formation exposes a site for KaiA binding that sequesters KaiA from KaiC, making the KaiC(6):KaiB(6):KaiA(12) complex that results in KaiC autodephosphorylation. Its function is as follows. A metamorphic protein which reversibly switches between an inactive tetrameric fold and a rare, thioredoxin-like monomeric fold (KaiB(fs)). KaiB(fs) binds phospho-KaiC, KaiA and CikA. KaiA and CikA compete for binding to KaiB(fs), and KaiB(fs) and SasA compete for binding to KaiC, thus the clock oscillator and output signal pathway are tightly coupled. In Parasynechococcus marenigrum (strain WH8102), this protein is Circadian clock oscillator protein KaiB.